The chain runs to 414 residues: Chromobox protein homolog 6 (414 aa).

Residues Phe11–Pro69 form the Chromo domain. Position 107 is a phosphoserine (Ser107). Disordered stretches follow at residues His127–Pro152, Ala267–Trp308, and Ala344–Ser365. Residues Ala267–Ser287 show a composition bias toward low complexity.

As to quaternary structure, component of a PRC1-like complex. Distinct PRC1-like core complexes are composed of a RING1 subunit (RING1B or RING1A), one of the six PCGF proteins (PCGF1-6), one PHC protein (PHC1-3) and one of the CBX proteins (CBX2, CBX4, CBX6, CBX7 or CBX8). Interacts with PCGF1, PCGF2, PCGF3, BMI1, PCGF5, PCGF6, RING1 and RNF2. May interact with H3C15 and H3C1. Interacts (via chromodomain) with single-stranded RNA (ssRNA). Post-translationally, ubiquitinated. Ubiquitination regulates the function of the Polycomb group (PcG) multiprotein PRC1-like complex. Deubiquitinated by USP26. As to expression, expressed in mouse embryonic stem cells.

The protein resides in the nucleus. The protein localises to the chromosome. Functionally, component of a Polycomb group (PcG) multiprotein PRC1-like complex, a complex class required to maintain the transcriptionally repressive state of many genes, including Hox genes, throughout development. PcG PRC1 complex acts via chromatin remodeling and modification of histones; it mediates monoubiquitination of histone H2A 'Lys-119', rendering chromatin heritably changed in its expressibility. Possibly contributes to the target selectivity of the PRC1 complex by binding specific regions of chromatin. Recruitment to chromatin might occur in an H3K27me3-independent fashion. May have a PRC1-independent function in embryonic stem cells. This is Chromobox protein homolog 6 (Cbx6) from Mus musculus (Mouse).